The following is a 1059-amino-acid chain: Dihydropyrimidine dehydrogenase [NADP(+)] (1059 aa).

Residues 84 to 118 form the 4Fe-4S ferredoxin-type 1 domain; sequence ERGALKEAMRCLKCADAPCQKSCPTQLDVKSFITS. Residues Cys-94, Cys-97, Cys-102, Cys-106, Cys-145, Cys-151, Cys-155, and Gln-171 each contribute to the [4Fe-4S] cluster site. FAD-binding positions include 207–211, 231–239, Arg-248, and Leu-274; these read GCGPA and EKRAYIGGL. NADP(+)-binding positions include 354–357, 378–379, Arg-385, 451–453, and 495–501; these read AGDT, RK, AFG, and DVAGVAE. Residue 494–503 participates in FAD binding; sequence GDVAGVAETT. Residues Ser-564 and 588 to 589 each bind FMN; that span reads KT. Substrate-binding positions include Asn-623 and 682-684; that span reads NLS. Residue Cys-685 is the Proton acceptor of the active site. Lys-723 lines the FMN pocket. Position 750–751 (750–751) interacts with substrate; that stretch reads NT. FMN is bound by residues Gly-781, 807-809, and 830-831; these read TGG and CS. 4Fe-4S ferredoxin-type domains are found at residues 955–987 and 989–1019; these read KVAI…FDPV and HQPH…MVPR. 8 residues coordinate [4Fe-4S] cluster: Cys-964, Cys-967, Cys-970, Cys-974, Cys-998, Cys-1001, Cys-1004, and Cys-1008.

The protein belongs to the dihydropyrimidine dehydrogenase family. The cofactor is [4Fe-4S] cluster. FAD is required as a cofactor. FMN serves as cofactor.

The enzyme catalyses 5,6-dihydrouracil + NADP(+) = uracil + NADPH + H(+). Its pathway is amino-acid biosynthesis; beta-alanine biosynthesis. Its function is as follows. Involved in pyrimidine base degradation. Catalyzes the reduction of uracil and thymine. Involved in the degradation of the chemotherapeutic drug 5-fluorouracil. The polypeptide is Dihydropyrimidine dehydrogenase [NADP(+)] (dpyd-1) (Caenorhabditis elegans).